A 276-amino-acid chain; its full sequence is 4-deoxy-L-threo-5-hexosulose-uronate ketol-isomerase (276 aa).

Zn(2+) is bound by residues histidine 194, histidine 196, glutamate 201, and histidine 243.

The protein belongs to the KduI family. Zn(2+) is required as a cofactor.

It carries out the reaction 5-dehydro-4-deoxy-D-glucuronate = 3-deoxy-D-glycero-2,5-hexodiulosonate. It participates in glycan metabolism; pectin degradation; 2-dehydro-3-deoxy-D-gluconate from pectin: step 4/5. Functionally, catalyzes the isomerization of 5-dehydro-4-deoxy-D-glucuronate to 3-deoxy-D-glycero-2,5-hexodiulosonate. The chain is 4-deoxy-L-threo-5-hexosulose-uronate ketol-isomerase from Shouchella clausii (strain KSM-K16) (Alkalihalobacillus clausii).